Consider the following 261-residue polypeptide: Thiazole synthase (261 aa).

The active-site Schiff-base intermediate with DXP is the K102. Residues G163, 189–190 (AG), and 211–212 (NT) contribute to the 1-deoxy-D-xylulose 5-phosphate site.

It belongs to the ThiG family. In terms of assembly, homotetramer. Forms heterodimers with either ThiH or ThiS.

It localises to the cytoplasm. The catalysed reaction is [ThiS sulfur-carrier protein]-C-terminal-Gly-aminoethanethioate + 2-iminoacetate + 1-deoxy-D-xylulose 5-phosphate = [ThiS sulfur-carrier protein]-C-terminal Gly-Gly + 2-[(2R,5Z)-2-carboxy-4-methylthiazol-5(2H)-ylidene]ethyl phosphate + 2 H2O + H(+). Its pathway is cofactor biosynthesis; thiamine diphosphate biosynthesis. Its function is as follows. Catalyzes the rearrangement of 1-deoxy-D-xylulose 5-phosphate (DXP) to produce the thiazole phosphate moiety of thiamine. Sulfur is provided by the thiocarboxylate moiety of the carrier protein ThiS. In vitro, sulfur can be provided by H(2)S. The protein is Thiazole synthase of Acinetobacter baumannii (strain SDF).